The following is a 289-amino-acid chain: ATP synthase gamma chain (289 aa).

It belongs to the ATPase gamma chain family. F-type ATPases have 2 components, CF(1) - the catalytic core - and CF(0) - the membrane proton channel. CF(1) has five subunits: alpha(3), beta(3), gamma(1), delta(1), epsilon(1). CF(0) has three main subunits: a, b and c.

It is found in the cell inner membrane. In terms of biological role, produces ATP from ADP in the presence of a proton gradient across the membrane. The gamma chain is believed to be important in regulating ATPase activity and the flow of protons through the CF(0) complex. The polypeptide is ATP synthase gamma chain (Histophilus somni (strain 129Pt) (Haemophilus somnus)).